The chain runs to 165 residues: CDP-archaeol synthase (165 aa).

4 helical membrane-spanning segments follow: residues 41–61, 72–92, 103–123, and 127–147; these read GLICGVLAGVLIGLVQIWLVG, ILSVTLLALGALLGDMGKSFI, AWPVADQYDLVVGAFLLTIIF, and WFFAVVTLPVLIAILVITPVL.

It belongs to the CDP-archaeol synthase family. Mg(2+) is required as a cofactor.

The protein localises to the cell membrane. The catalysed reaction is 2,3-bis-O-(geranylgeranyl)-sn-glycerol 1-phosphate + CTP + H(+) = CDP-2,3-bis-O-(geranylgeranyl)-sn-glycerol + diphosphate. It participates in membrane lipid metabolism; glycerophospholipid metabolism. Catalyzes the formation of CDP-2,3-bis-(O-geranylgeranyl)-sn-glycerol (CDP-archaeol) from 2,3-bis-(O-geranylgeranyl)-sn-glycerol 1-phosphate (DGGGP) and CTP. This reaction is the third ether-bond-formation step in the biosynthesis of archaeal membrane lipids. This Methanoregula boonei (strain DSM 21154 / JCM 14090 / 6A8) protein is CDP-archaeol synthase.